We begin with the raw amino-acid sequence, 351 residues long: Phosphoribosylformylglycinamidine cyclo-ligase (351 aa).

It belongs to the AIR synthase family.

Its subcellular location is the cytoplasm. The enzyme catalyses 2-formamido-N(1)-(5-O-phospho-beta-D-ribosyl)acetamidine + ATP = 5-amino-1-(5-phospho-beta-D-ribosyl)imidazole + ADP + phosphate + H(+). It participates in purine metabolism; IMP biosynthesis via de novo pathway; 5-amino-1-(5-phospho-D-ribosyl)imidazole from N(2)-formyl-N(1)-(5-phospho-D-ribosyl)glycinamide: step 2/2. The protein is Phosphoribosylformylglycinamidine cyclo-ligase of Burkholderia ambifaria (strain MC40-6).